The following is a 260-amino-acid chain: Endomucin (260 aa).

The N-terminal stretch at 1–18 is a signal peptide; that stretch reads MELLQVTILFLLPSICSS. N-linked (GlcNAc...) asparagine glycans are attached at residues Asn-19, Asn-28, Asn-97, and Asn-103. The Extracellular segment spans residues 19-189; the sequence is NSTGVLEAAN…TSATSRSYSS (171 aa). Composition is skewed to polar residues over residues 119–133 and 145–170; these read QSSK…SIKT and ASPS…SQVI. The tract at residues 119 to 182 is disordered; that stretch reads QSSKPKTETQ…EGGKNASTSA (64 aa). Asn-163 and Asn-177 each carry an N-linked (GlcNAc...) asparagine glycan. A helical membrane pass occupies residues 190-210; that stretch reads IILPVVIALIVITLSVFVLVG. The Cytoplasmic segment spans residues 211–260; that stretch reads LYRMCWKADPGTPENGNDQPQSDKESVKLLTVKTISHESGEHSAQGKTKN. Residue Ser-236 is modified to Phosphoserine.

Post-translationally, highly O-glycosylated. Sialic acid-rich glycoprotein.

The protein resides in the membrane. In terms of biological role, endothelial sialomucin, also called endomucin or mucin-like sialoglycoprotein, which interferes with the assembly of focal adhesion complexes and inhibits interaction between cells and the extracellular matrix. This Pongo abelii (Sumatran orangutan) protein is Endomucin (EMCN).